Here is a 115-residue protein sequence, read N- to C-terminus: Replication initiation control protein YabA (115 aa).

His90, Cys92, Cys106, and Cys109 together coordinate Zn(2+).

It belongs to the YabA family. In terms of assembly, homotetramer. Interacts with both DnaA and DnaN, acting as a bridge between these two proteins. The cofactor is Zn(2+).

It localises to the cytoplasm. It is found in the nucleoid. Its function is as follows. Involved in control of chromosome replication initiation. Inhibits the cooperative binding of DnaA to the oriC region, thus negatively regulating initiation of chromosome replication. Inhibits the ability of DnaA-ATP to form a helix on DNA; does not disassemble preformed DnaA-DNA helices. Decreases the residence time of DnaA on the chromosome at its binding sites (oriC, replication forks and promoter-binding sites). Tethers DnaA to the replication machinery via the DNA polymerase beta sliding clamp subunit (dnaN). Associates with oriC and other DnaA targets on the chromosome in a DnaA-dependent manner. This is Replication initiation control protein YabA from Staphylococcus epidermidis (strain ATCC 35984 / DSM 28319 / BCRC 17069 / CCUG 31568 / BM 3577 / RP62A).